A 538-amino-acid chain; its full sequence is Syncytin-1 (538 aa).

An N-terminal signal peptide occupies residues 1-20; that stretch reads MALPYHIFLFTVLLPSFTLT. The Extracellular portion of the chain corresponds to 31–443; it reads SSPYQEFLWR…NIGPWGLLSQ (413 aa). A glycan (N-linked (GlcNAc...) asparagine) is linked at asparagine 169. A CXXC motif is present at residues 186–189; it reads CWMC. Cystine bridges form between cysteine 186–cysteine 189, cysteine 186–cysteine 405, and cysteine 397–cysteine 404. Residues asparagine 208, asparagine 214, asparagine 234, asparagine 242, and asparagine 281 are each glycosylated (N-linked (GlcNAc...) asparagine). Positions 320-340 are fusion peptide; sequence ILPFVMGAGVLGALGTGIGSI. Residues 380–396 are immunosuppression; the sequence is LQNRRALDLLTAERGGT. Residues 397–405 carry the CX6CC motif; it reads CLFLGEECC. Asparagine 409 carries N-linked (GlcNAc...) asparagine glycosylation. Residues 444 to 464 traverse the membrane as a helical segment; the sequence is WMPWILPFLGPLAAIILLLLF. The tract at residues 465-484 is essential for the fusiogenic function; it reads GPCIFNLLVNFVSSRIEAIK. At 465–538 the chain is on the cytoplasmic side; the sequence is GPCIFNLLVN…LLRPNSAGSS (74 aa). The disordered stretch occupies residues 494-538; the sequence is KTKNYRRSLDWPASPRSDVNDIKGIPPEEISTAQPLLRPNSAGSS.

This sequence belongs to the gamma type-C retroviral envelope protein family. HERV class-I W env subfamily. In terms of assembly, the mature envelope protein (Env) consists of a trimer of SU-TM heterodimers attached probably by a labile interchain disulfide bond. Interacts with the C-type lectin CD209/DC-SIGN. In terms of processing, specific enzymatic cleavages in vivo yield mature proteins. Envelope glycoproteins are synthesized as an inactive precursor that is heavily N-glycosylated and processed likely by furin in the Golgi to yield the mature SU and TM proteins. The cleavage site between SU and TM requires the minimal sequence [KR]-X-[KR]-R. The CXXC motif is highly conserved across a broad range of retroviral envelope proteins. It is thought to participate in the formation of a labile disulfide bond possibly with the CX6CC motif present in the transmembrane protein.

It localises to the cell membrane. The protein resides in the virion. Functionally, this endogenous retroviral envelope protein has retained its original fusogenic properties and participates in trophoblast fusion and the formation of a syncytium during placenta morphogenesis. May recognize and induce fusion through binding of SLC1A4 and SLC1A5. Its function is as follows. Endogenous envelope proteins may have kept, lost or modified their original function during evolution. Retroviral envelope proteins mediate receptor recognition and membrane fusion during early infection. The surface protein (SU) mediates receptor recognition, while the transmembrane protein (TM) acts as a class I viral fusion protein. The protein may have at least 3 conformational states: pre-fusion native state, pre-hairpin intermediate state, and post-fusion hairpin state. During viral and target cell membrane fusion, the coiled coil regions (heptad repeats) assume a trimer-of-hairpins structure, positioning the fusion peptide in close proximity to the C-terminal region of the ectodomain. The formation of this structure appears to drive apposition and subsequent fusion of membranes. This is Syncytin-1 (ERVW-1) from Hylobates pileatus (Pileated gibbon).